The chain runs to 459 residues: MIKDPFARLGLDREILTVSQLNGRARVLLEDVFTNIWVEGEISNLARPASGHVYFTLKDSGAQVRCALFRNNAARVRQALKDGLAVKVRGKVSLFEGRGDYQLILDTVEPAGDGALRLAFDALKEKLSAEGLFSAERKVPLPAHPRRIGIISSPTGAVIRDIISVFRRRAPNIELTLIPTAVQGREAIPQIVRALKLADARGFDALILARGGGSLEDLWCFNEEAVARAVDACITPIVSAVGHETDVSISDFVADVRAPTPSAAAELLAPDASHLVRQVENLHRRLVMLMRNRLSHDRLRLEGMARRLRHPGERLRQQAQRLDDLDMRLRRAFERSLNTRRERLIRLETRLAGQHPGRQLALLRQRLESLAERLPRAMREGLKARRLQLQSQVQTLHVVSPLATLGRGYSILLDERGQAIRTAAQTHTGQRLTARLGEGQLQVRVEDNHLTPVTLSLLD.

Belongs to the XseA family. In terms of assembly, heterooligomer composed of large and small subunits.

Its subcellular location is the cytoplasm. It catalyses the reaction Exonucleolytic cleavage in either 5'- to 3'- or 3'- to 5'-direction to yield nucleoside 5'-phosphates.. Bidirectionally degrades single-stranded DNA into large acid-insoluble oligonucleotides, which are then degraded further into small acid-soluble oligonucleotides. The chain is Exodeoxyribonuclease 7 large subunit from Pseudomonas fluorescens (strain SBW25).